We begin with the raw amino-acid sequence, 494 residues long: MAGGGGELTAALLKKTAENGGEEKDELGLKQKVWIESKKLWIVAAPAIFTRFSTFGVSIISQSFIGHLGPIELAAYSITFTVLLRFSNGILLGMASALETLCGQAYGAKQNHMLGIYLQRSWIVLTGCTICLTPVYIFSGPILLALGQEERIVRVARIIALWVIGINFSFVPSFTCQMFLQAQSKNKIIAYVAAVSLGVHVFLSWLLMVHFNFGITGAMTSTLVAFWLPNIAQLLFVTCGGCKDTWRGFSMMAFKDLWPVFKLSMSSGGMLCLELWYNSILVLLTGNLKNAEVALDALAICLNINGLEMMIALGFLAAASVRVSNELGSGNPKGAKFATLTAVFTSLSLGIVLFFVFLFLRGRVSYIFTTSEAVAAEVADLSPLLAFSILMNSVQPVLSGVAVGAGWQGYVTYVNLACYYLVGIPIGIILGYVVGLQVKGVWIGMLFGIFVQTCVLTVMTLRTDWDQQVSTSLRRLNRWVVPESRDVNQVSSEE.

Residue alanine 2 is modified to N-acetylalanine. 12 consecutive transmembrane segments (helical) span residues leucine 40 to isoleucine 60, leucine 73 to alanine 95, isoleucine 123 to leucine 143, isoleucine 158 to methionine 178, isoleucine 188 to methionine 208, glycine 217 to valine 237, glycine 268 to leucine 288, alanine 297 to alanine 317, leucine 340 to leucine 360, leucine 384 to glycine 404, leucine 416 to leucine 436, and valine 441 to leucine 461.

Belongs to the multi antimicrobial extrusion (MATE) (TC 2.A.66.1) family.

It is found in the membrane. This chain is Protein DETOXIFICATION 21, found in Arabidopsis thaliana (Mouse-ear cress).